Here is a 210-residue protein sequence, read N- to C-terminus: MRVKICGITQPQQSIAIASLGATALGFICVPNSPRYVTTSQIRAAVAELPADIDTIGVFANSSIVEISQIVVDSGLTGVQLHGDELPDFCYQLRQALPNVEIIKALRIRSLEHLGTAADYTKYVDTLLLDAYHPEQLGGTGKTLDWKILEQFNPNCPWFLAGGLTADNIVEALSQVSPSGVDLSSGVERAPGDKDLDKVSKLFEKLGSRE.

The protein belongs to the TrpF family.

It carries out the reaction N-(5-phospho-beta-D-ribosyl)anthranilate = 1-(2-carboxyphenylamino)-1-deoxy-D-ribulose 5-phosphate. It functions in the pathway amino-acid biosynthesis; L-tryptophan biosynthesis; L-tryptophan from chorismate: step 3/5. The chain is N-(5'-phosphoribosyl)anthranilate isomerase from Nostoc punctiforme (strain ATCC 29133 / PCC 73102).